The chain runs to 347 residues: 4-hydroxy-2-oxovalerate aldolase (347 aa).

One can recognise a Pyruvate carboxyltransferase domain in the interval 2–252 (ILISDATLRD…DTRTTFERVM (251 aa)). 10 to 11 (RD) is a substrate binding site. D11 serves as a coordination point for Mn(2+). Catalysis depends on H14, which acts as the Proton acceptor. Residues S164 and H191 each coordinate substrate. Residues H191 and H193 each coordinate Mn(2+).

The protein belongs to the 4-hydroxy-2-oxovalerate aldolase family.

It catalyses the reaction (S)-4-hydroxy-2-oxopentanoate = acetaldehyde + pyruvate. The chain is 4-hydroxy-2-oxovalerate aldolase from Burkholderia pseudomallei (strain 1106a).